Here is a 352-residue protein sequence, read N- to C-terminus: uncharacterized protein (352 aa).

The disordered stretch occupies residues 1 to 40; sequence MTSTMKLFTDHAEISVRERPPQRNNNNQEQDNSNRPAPRR. Basic and acidic residues predominate over residues 8 to 21; the sequence is FTDHAEISVRERPP. A compositionally biased stretch (low complexity) spans 22 to 36; sequence QRNNNNQEQDNSNRP. The chain crosses the membrane as a helical span at residues 317 to 333; the sequence is MTITLPCGLTIAFFVYY.

It is found in the host cell membrane. This is an uncharacterized protein from Diadromus pulchellus idnoreovirus 1 (DpIRV-1).